A 398-amino-acid polypeptide reads, in one-letter code: Argininosuccinate synthase (398 aa).

8 to 16 is a binding site for ATP; it reads AYSGGLDTS. Tyr-87 is an L-citrulline binding site. Residue Gly-117 coordinates ATP. L-aspartate is bound by residues Thr-119, Asn-123, and Asp-124. Asn-123 contributes to the L-citrulline binding site. The L-citrulline site is built by Arg-127, Ser-175, Glu-260, and Tyr-272.

It belongs to the argininosuccinate synthase family. Type 1 subfamily. Homotetramer.

The protein resides in the cytoplasm. It catalyses the reaction L-citrulline + L-aspartate + ATP = 2-(N(omega)-L-arginino)succinate + AMP + diphosphate + H(+). It participates in amino-acid biosynthesis; L-arginine biosynthesis; L-arginine from L-ornithine and carbamoyl phosphate: step 2/3. The protein is Argininosuccinate synthase of Mycobacterium tuberculosis (strain ATCC 25618 / H37Rv).